The following is a 1033-amino-acid chain: Potassium-transporting ATPase alpha chain 1 (1033 aa).

Over 1-96 (MGKENYELYS…NALRPPRGTP (96 aa)) the chain is Cytoplasmic. 2 positions are modified to phosphotyrosine: Tyr-6 and Tyr-9. Positions 14 to 39 (GTGPGGDMAAKMSKKKAGGGGGKKKE) are disordered. Over residues 25-38 (MSKKKAGGGGGKKK) the composition is skewed to basic residues. Ser-26 is modified (phosphoserine). A helical membrane pass occupies residues 97–117 (EYVKFARQLAGGLQCLMWVAA). Over 118 to 140 (AICLIAFAIQASEGDLTTDDNLY) the chain is Lumenal. The helical transmembrane segment at 141–161 (LALALIAVVVVTGCFGYYQEF) threads the bilayer. Residues 162–297 (KSTNIIASFK…NEKTPIAIEI (136 aa)) are Cytoplasmic-facing. Residues 298 to 317 (EHFVDIIAGLAILFGATFFV) form a helical membrane-spanning segment. The Lumenal portion of the chain corresponds to 318-329 (VAMCIGYTFLRA). The chain crosses the membrane as a helical span at residues 330–347 (MVFFMAIVVAYVPEGLLA). The K(+) site is built by Val-338, Ala-339, Val-341, and Glu-343. The Cytoplasmic segment spans residues 348-781 (TVTVCLSLTA…EQGRLIFDNL (434 aa)). Asp-385 (4-aspartylphosphate intermediate) is an active-site residue. Residues Asp-385 and Thr-387 each contribute to the Mg(2+) site. A phosphoserine mark is found at Ser-461 and Ser-599. The Mg(2+) site is built by Asp-726 and Asp-730. A helical transmembrane segment spans residues 782–801 (KKSIAYTLTKNIPELTPYLI). Residue Glu-795 coordinates K(+). Over 802 to 811 (YITVSVPLPL) the chain is Lumenal. A helical transmembrane segment spans residues 812-832 (GCITILFIELCTDIFPSVSLA). K(+) is bound at residue Glu-820. Topologically, residues 833–852 (YEKAESDIMHLRPRNPRRDR) are cytoplasmic. Ser-838 is subject to Phosphoserine. Residues 853–875 (LVNEPLAAYSYFQIGAIQSFAGF) form a helical membrane-spanning segment. Residues 876–927 (ADYFTAMAQEGWFPLLCVGLRPQWEDHHLQDLQDSYGQEWTFGQRLYQQYTC) lie on the Lumenal side of the membrane. The chain crosses the membrane as a helical span at residues 928-947 (YTVFFISIEMCQIADVLIRK). Residues 948–961 (TRRLSAFQQGFFRN) are Cytoplasmic-facing. The residue at position 952 (Ser-952) is a Phosphoserine; by PKA. Residues 962–980 (RILVIAIVFQVCIGCFLCY) form a helical membrane-spanning segment. At 981 to 995 (CPGMPNIFNFMPIRF) the chain is on the lumenal side. A helical membrane pass occupies residues 996–1016 (QWWLVPMPFGLLIFVYDEIRK). Topologically, residues 1017–1033 (LGVRCCPGSWWDQELYY) are cytoplasmic.

This sequence belongs to the cation transport ATPase (P-type) (TC 3.A.3) family. Type IIC subfamily. As to quaternary structure, the gastric H(+)/K(+) ATPase pump is composed of the catalytic alpha subunit ATP4A and the regulatory beta subunit ATP4B. Interacts (via the P-domain) with ATP4B (via N-terminus); this interaction stabilizes the lumenal-open E2 conformation state and prevents the reverse reaction of the transport cycle.

It is found in the apical cell membrane. The catalysed reaction is K(+)(out) + ATP + H2O + H(+)(in) = K(+)(in) + ADP + phosphate + 2 H(+)(out). Its function is as follows. The catalytic subunit of the gastric H(+)/K(+) ATPase pump which transports H(+) ions in exchange for K(+) ions across the apical membrane of parietal cells. Uses ATP as an energy source to pump H(+) ions to the gastric lumen while transporting K(+) ion from the lumen into the cell. Remarkably generates a million-fold proton gradient across the gastric parietal cell membrane, acidifying the gastric juice down to pH 1. Within a transport cycle, the transfer of a H(+) ion across the membrane is coupled to ATP hydrolysis and is associated with a transient phosphorylation that shifts the pump conformation from inward-facing (E1) to outward-facing state (E2). The release of the H(+) ion in the stomach lumen is followed by binding of K(+) ion converting the pump conformation back to the E1 state. This chain is Potassium-transporting ATPase alpha chain 1 (Atp4a), found in Rattus norvegicus (Rat).